Here is a 254-residue protein sequence, read N- to C-terminus: ATP synthase subunit a (254 aa).

Positions 1-6 (MAFLIH) are cleaved as a propeptide — removed in mature form. 7 consecutive transmembrane segments (helical) span residues 32–52 (LTNLGLYTILTVYLVLALHIM), 83–103 (IGAANEMYLPFIYSLFFFILI), 119–139 (SIMVSIGLSMTIFIGVTILGL), 146–166 (FFSFFVPSGTPLGLVPLLVPI), 182–202 (LFANVTAGHVLMKILAGFLAP), 207–227 (TFIISVLTVLPFIIFTGIIGL), and 228–248 (EIAVSFIQAYVFCVLTCSYLK).

It belongs to the ATPase A chain family. As to quaternary structure, F-type ATPases have 2 components, CF(1) - the catalytic core - and CF(0) - the membrane proton channel. CF(1) has five subunits: alpha(3), beta(3), gamma(1), delta(1), epsilon(1). CF(0) has three main subunits: a, b and c.

Its subcellular location is the mitochondrion inner membrane. Mitochondrial membrane ATP synthase (F(1)F(0) ATP synthase or Complex V) produces ATP from ADP in the presence of a proton gradient across the membrane which is generated by electron transport complexes of the respiratory chain. F-type ATPases consist of two structural domains, F(1) - containing the extramembraneous catalytic core and F(0) - containing the membrane proton channel, linked together by a central stalk and a peripheral stalk. During catalysis, ATP synthesis in the catalytic domain of F(1) is coupled via a rotary mechanism of the central stalk subunits to proton translocation. Key component of the proton channel; it may play a direct role in the translocation of protons across the membrane. The protein is ATP synthase subunit a (ATP6) of Mycosarcoma maydis (Corn smut fungus).